A 119-amino-acid chain; its full sequence is T cell receptor alpha variable 29/delta variable 5 (119 aa).

An N-terminal signal peptide occupies residues 1–21 (MAMLLGASVLILWLQPDWVNS). The 98-residue stretch at 22 to 119 (QQKNDDQQVK…DSAVYFCAAS (98 aa)) folds into the Ig-like domain. A disulfide bond links Cys49 and Cys116. An N-linked (GlcNAc...) asparagine glycan is attached at Asn93.

As to quaternary structure, alpha-beta TR is a heterodimer composed of an alpha and beta chain; disulfide-linked. The alpha-beta TR is associated with the transmembrane signaling CD3 coreceptor proteins to form the TR-CD3 (TcR or TCR). The assembly of alpha-beta TR heterodimers with CD3 occurs in the endoplasmic reticulum where a single alpha-beta TR heterodimer associates with one CD3D-CD3E heterodimer, one CD3G-CD3E heterodimer and one CD247 homodimer forming a stable octameric structure. CD3D-CD3E and CD3G-CD3E heterodimers preferentially associate with TR alpha and TR beta chains, respectively. The association of the CD247 homodimer is the last step of TcR assembly in the endoplasmic reticulum and is required for transport to the cell surface.

The protein localises to the cell membrane. Its function is as follows. V region of the variable domain of T cell receptor (TR) alpha chain that participates in the antigen recognition. Alpha-beta T cell receptors are antigen specific receptors which are essential to the immune response and are present on the cell surface of T lymphocytes. Recognize peptide-major histocompatibility (MH) (pMH) complexes that are displayed by antigen presenting cells (APC), a prerequisite for efficient T cell adaptive immunity against pathogens. Binding of alpha-beta TR to pMH complex initiates TR-CD3 clustering on the cell surface and intracellular activation of LCK that phosphorylates the ITAM motifs of CD3G, CD3D, CD3E and CD247 enabling the recruitment of ZAP70. In turn ZAP70 phosphorylates LAT, which recruits numerous signaling molecules to form the LAT signalosome. The LAT signalosome propagates signal branching to three major signaling pathways, the calcium, the mitogen-activated protein kinase (MAPK) kinase and the nuclear factor NF-kappa-B (NF-kB) pathways, leading to the mobilization of transcription factors that are critical for gene expression and essential for T cell growth and differentiation. The T cell repertoire is generated in the thymus, by V-(D)-J rearrangement. This repertoire is then shaped by intrathymic selection events to generate a peripheral T cell pool of self-MH restricted, non-autoaggressive T cells. Post-thymic interaction of alpha-beta TR with the pMH complexes shapes TR structural and functional avidity. This Homo sapiens (Human) protein is T cell receptor alpha variable 29/delta variable 5.